Consider the following 399-residue polypeptide: DNA replication and repair protein RecF (399 aa).

Position 30–37 (30–37 (GSNGIGKT)) interacts with ATP.

It belongs to the RecF family.

The protein localises to the cytoplasm. The RecF protein is involved in DNA metabolism; it is required for DNA replication and normal SOS inducibility. RecF binds preferentially to single-stranded, linear DNA. It also seems to bind ATP. The protein is DNA replication and repair protein RecF of Paenarthrobacter aurescens (strain TC1).